A 395-amino-acid chain; its full sequence is S-adenosylmethionine synthase (395 aa).

ATP is bound at residue histidine 16. Aspartate 18 contacts Mg(2+). Residue glutamate 44 participates in K(+) binding. Residues glutamate 57 and glutamine 100 each contribute to the L-methionine site. A flexible loop region spans residues 100–110; it reads QSTDIAQGVNE. ATP-binding positions include 174–176, 241–242, aspartate 250, 256–257, alanine 273, and lysine 277; these read DAK, RF, and RK. Position 250 (aspartate 250) interacts with L-methionine. Lysine 281 serves as a coordination point for L-methionine.

The protein belongs to the AdoMet synthase family. As to quaternary structure, homotetramer; dimer of dimers. Mg(2+) serves as cofactor. Requires K(+) as cofactor.

It localises to the cytoplasm. It catalyses the reaction L-methionine + ATP + H2O = S-adenosyl-L-methionine + phosphate + diphosphate. The protein operates within amino-acid biosynthesis; S-adenosyl-L-methionine biosynthesis; S-adenosyl-L-methionine from L-methionine: step 1/1. In terms of biological role, catalyzes the formation of S-adenosylmethionine (AdoMet) from methionine and ATP. The overall synthetic reaction is composed of two sequential steps, AdoMet formation and the subsequent tripolyphosphate hydrolysis which occurs prior to release of AdoMet from the enzyme. This Streptococcus uberis (strain ATCC BAA-854 / 0140J) protein is S-adenosylmethionine synthase.